A 206-amino-acid polypeptide reads, in one-letter code: MSEFNETKFSNNGTFFETEEPIVETKSISVYTPLIYVFILVVSLVMFASSYRKKQAKKISEQPSIFDENDAHDLYFQIKEMSENEKIHEKVLKAALLNRGAESVRRSLKLKELAPQINLLYKNGSIGEDYWKRFETEVKLIELEFKDTLQEAERLQPGWVQLFVMVCKEICFNQALSRRYQSILKRKEVCIKEWELKINNDGRLVN.

Residues Met1 to Ser27 are Lumenal-facing. N-linked (GlcNAc...) asparagine glycosylation is found at Asn5 and Asn12. A helical; Signal-anchor for type II membrane protein transmembrane segment spans residues Ile28 to Ala48. Residues Ser49 to Asn206 lie on the Cytoplasmic side of the membrane.

The protein to S.pombe SpBC409.21. In terms of assembly, component of the heterotetrameric Sec62/63complex composed of SEC62, SEC63, SEC66 and SEC72. The Sec62/63 complex associates with the Sec61 complex to form the Sec complex. Part of a complex consisting of KAR2, SEC63, SEC66 and SEC72.

It localises to the endoplasmic reticulum membrane. In terms of biological role, acts as a component of the Sec62/63 complex which is involved in SRP-independent post-translational translocation across the endoplasmic reticulum (ER) and functions together with the Sec61 complex and KAR2 in a channel-forming translocon complex. A cycle of assembly and disassembly of Sec62/63 complex from SEC61 may govern the activity of the translocon. SEC66 is required to attach or retain SEC72 in the SEC63 complex. It is essential for growth at elevated temperatures. The chain is Translocation protein SEC66 (SEC66) from Saccharomyces cerevisiae (strain ATCC 204508 / S288c) (Baker's yeast).